We begin with the raw amino-acid sequence, 242 residues long: 3-oxoacyl-[acyl-carrier-protein] reductase FabG (242 aa).

NADP(+)-binding positions include 10–13 (GSTR), Thr35, 57–58 (NV), and Asn84. Substrate is bound at residue Ser136. Tyr149 acts as the Proton acceptor in catalysis. Residues 149–153 (YCAAK) and Ile182 each bind NADP(+).

This sequence belongs to the short-chain dehydrogenases/reductases (SDR) family. In terms of assembly, homotetramer.

The enzyme catalyses a (3R)-hydroxyacyl-[ACP] + NADP(+) = a 3-oxoacyl-[ACP] + NADPH + H(+). Its pathway is lipid metabolism; fatty acid biosynthesis. In terms of biological role, catalyzes the NADPH-dependent reduction of beta-ketoacyl-ACP substrates to beta-hydroxyacyl-ACP products, the first reductive step in the elongation cycle of fatty acid biosynthesis. The chain is 3-oxoacyl-[acyl-carrier-protein] reductase FabG (fabG) from Haemophilus influenzae (strain ATCC 51907 / DSM 11121 / KW20 / Rd).